Here is a 128-residue protein sequence, read N- to C-terminus: Cystatin-1 (128 aa).

Residues 1–17 form the signal peptide; it reads MIRSAVVLTVLVGVCLA. The Cystatin domain maps to 20–128; that stretch reads GFVGGWSQVD…TKEVTSFECN (109 aa). Disulfide bonds link Cys-84-Cys-96 and Cys-107-Cys-127.

The protein belongs to the cystatin family. Mainly expressed in gut.

The protein resides in the secreted. Its function is as follows. Inhibitor of cysteine proteinases. Strongly inhibits mammalian cathepsin B and H, and moderately inhibits mammalian cathepsin C. Also inhibits endogenous cathepsin B-like but not cathepsin C-like proteinases. May have a protective role against undesired digestion of a stored blood meal by endogenous peptidases. This chain is Cystatin-1, found in Ornithodoros moubata (Soft tick).